Reading from the N-terminus, the 872-residue chain is Protein SEY1 (872 aa).

Topologically, residues 1–749 are cytoplasmic; sequence MVANGHFAGV…KRSAIGGITQ (749 aa). The region spanning 49-307 is the GB1/RHD3-type G domain; sequence GFNYHLISVF…IPADGFAVYA (259 aa). 59 to 66 lines the GTP pocket; that stretch reads GSQSTGKS. Residues 482 to 504 are a coiled coil; it reads SNYQQELSLYQKDLENIGGQLRR. The tract at residues 676–704 is disordered; the sequence is LDKWIGHTPSSATPADEEDLTPIGGVDED. Positions 690 to 704 are enriched in acidic residues; the sequence is ADEEDLTPIGGVDED. A helical transmembrane segment spans residues 750-770; that stretch reads VPLYFYGLLLALGWNEIVAVL. At 771-773 the chain is on the lumenal side; sequence RNP. A helical membrane pass occupies residues 774–794; it reads AYFLLLFVCAVTAYVTYQLNL. The Cytoplasmic segment spans residues 795–872; the sequence is WGPIIKMTEA…IDDADDDDDF (78 aa). Positions 849 to 872 are disordered; sequence NRKSAGGFQNNRSHIDDADDDDDF.

This sequence belongs to the TRAFAC class dynamin-like GTPase superfamily. GB1/RHD3 GTPase family. RHD3 subfamily.

The protein resides in the endoplasmic reticulum membrane. In terms of biological role, cooperates with the reticulon proteins and tubule-shaping DP1 family proteins to generate and maintain the structure of the tubular endoplasmic reticulum network. Has GTPase activity, which is required for its function in ER organization. In Paracoccidioides brasiliensis (strain Pb18), this protein is Protein SEY1.